Consider the following 404-residue polypeptide: Cysteine desulfurase IscS (404 aa).

Pyridoxal 5'-phosphate contacts are provided by residues 75-76 (AT), N155, Q183, and 203-205 (SGH). K206 bears the N6-(pyridoxal phosphate)lysine mark. Pyridoxal 5'-phosphate is bound at residue T243. C328 (cysteine persulfide intermediate) is an active-site residue. Residue C328 participates in [2Fe-2S] cluster binding.

The protein belongs to the class-V pyridoxal-phosphate-dependent aminotransferase family. NifS/IscS subfamily. As to quaternary structure, homodimer. Forms a heterotetramer with IscU, interacts with other sulfur acceptors. The cofactor is pyridoxal 5'-phosphate.

It is found in the cytoplasm. It catalyses the reaction (sulfur carrier)-H + L-cysteine = (sulfur carrier)-SH + L-alanine. The protein operates within cofactor biosynthesis; iron-sulfur cluster biosynthesis. Master enzyme that delivers sulfur to a number of partners involved in Fe-S cluster assembly, tRNA modification or cofactor biosynthesis. Catalyzes the removal of elemental sulfur atoms from cysteine to produce alanine. Functions as a sulfur delivery protein for Fe-S cluster synthesis onto IscU, an Fe-S scaffold assembly protein, as well as other S acceptor proteins. This Shewanella putrefaciens (strain CN-32 / ATCC BAA-453) protein is Cysteine desulfurase IscS.